We begin with the raw amino-acid sequence, 721 residues long: Oviduct-specific glycoprotein (721 aa).

Positions methionine 1–alanine 21 are cleaved as a signal peptide. The GH18 domain occupies tyrosine 22–threonine 385. A disulfide bond links cysteine 26 and cysteine 51. Chitin contacts are provided by residues leucine 71–glutamine 72, glycine 98–asparagine 101, tyrosine 142, leucine 211–aspartate 214, and tryptophan 355. 2 N-linked (GlcNAc...) asparagine glycosylation sites follow: asparagine 402 and asparagine 442. Positions threonine 444–glycine 456 are enriched in polar residues. A disordered region spans residues threonine 444–valine 465. A glycan (N-linked (GlcNAc...) asparagine) is linked at asparagine 469. 21 repeat units span residues serine 486–valine 492, serine 493–isoleucine 499, serine 500–valine 506, serine 507–valine 513, serine 514–isoleucine 520, serine 521–isoleucine 527, serine 528–valine 534, serine 535–valine 541, serine 542–isoleucine 548, serine 549–valine 555, serine 556–isoleucine 562, serine 563–isoleucine 569, serine 570–valine 576, serine 577–valine 583, serine 584–isoleucine 590, serine 591–isoleucine 597, serine 598–isoleucine 604, serine 605–isoleucine 611, serine 612–isoleucine 618, serine 619–isoleucine 625, and serine 626–methionine 632. Residues serine 486–methionine 632 are 21 X 7 AA tandem repeats of S-K-[TAI]-[TI]-[TAP]-[GED]-[IVM].

Belongs to the glycosyl hydrolase 18 family. Epithelial cells of the oviduct.

The protein localises to the cytoplasmic vesicle. It is found in the secretory vesicle. Binds to oocyte zona pellucida in vivo. May play a role in the fertilization process and/or early embryonic development. This chain is Oviduct-specific glycoprotein (Ovgp1), found in Mus musculus (Mouse).